Here is a 217-residue protein sequence, read N- to C-terminus: MQHSAWHTLIKEQLPEGYFAKINHFLDEVYASGTIYPPREKVFNAIQTTDLADVKVVILGQDPYHGPKQAQGLSFSVPDDIPAPPSLQNILKELADDIGVKESHDLTSWAQQGVLLLNAGLTVPAGQANAHAGLIWEPFTDAIIKVVNEKSDPVVFILWGSYARKKKNLISNSQHLIIESAHPSPLSAYRGFFGSKPFSRTNDFLVAKGLEPINWLA.

Asp62 functions as the Proton acceptor in the catalytic mechanism.

Belongs to the uracil-DNA glycosylase (UDG) superfamily. UNG family.

The protein localises to the cytoplasm. It carries out the reaction Hydrolyzes single-stranded DNA or mismatched double-stranded DNA and polynucleotides, releasing free uracil.. Functionally, excises uracil residues from the DNA which can arise as a result of misincorporation of dUMP residues by DNA polymerase or due to deamination of cytosine. The polypeptide is Uracil-DNA glycosylase (Streptococcus gordonii (strain Challis / ATCC 35105 / BCRC 15272 / CH1 / DL1 / V288)).